Reading from the N-terminus, the 177-residue chain is NADH-quinone oxidoreductase subunit B (177 aa).

C56, C57, C121, and C151 together coordinate [4Fe-4S] cluster.

The protein belongs to the complex I 20 kDa subunit family. NDH-1 is composed of 14 different subunits. Subunits NuoB, C, D, E, F, and G constitute the peripheral sector of the complex. [4Fe-4S] cluster serves as cofactor.

The protein resides in the cell inner membrane. The enzyme catalyses a quinone + NADH + 5 H(+)(in) = a quinol + NAD(+) + 4 H(+)(out). In terms of biological role, NDH-1 shuttles electrons from NADH, via FMN and iron-sulfur (Fe-S) centers, to quinones in the respiratory chain. Couples the redox reaction to proton translocation (for every two electrons transferred, four hydrogen ions are translocated across the cytoplasmic membrane), and thus conserves the redox energy in a proton gradient. This Sphingopyxis alaskensis (strain DSM 13593 / LMG 18877 / RB2256) (Sphingomonas alaskensis) protein is NADH-quinone oxidoreductase subunit B.